Here is a 433-residue protein sequence, read N- to C-terminus: Signal recognition particle 54 kDa protein (433 aa).

Residues Gly100 to Thr107, Asp180 to Arg184, and Thr238 to Asp241 each bind GTP.

The protein belongs to the GTP-binding SRP family. SRP54 subfamily. Part of the signal recognition particle protein translocation system, which is composed of SRP and FtsY. Archaeal SRP consists of a 7S RNA molecule of 300 nucleotides and two protein subunits: SRP54 and SRP19.

The protein localises to the cytoplasm. The enzyme catalyses GTP + H2O = GDP + phosphate + H(+). Functionally, involved in targeting and insertion of nascent membrane proteins into the cytoplasmic membrane. Binds to the hydrophobic signal sequence of the ribosome-nascent chain (RNC) as it emerges from the ribosomes. The SRP-RNC complex is then targeted to the cytoplasmic membrane where it interacts with the SRP receptor FtsY. This is Signal recognition particle 54 kDa protein from Archaeoglobus fulgidus (strain ATCC 49558 / DSM 4304 / JCM 9628 / NBRC 100126 / VC-16).